The sequence spans 338 residues: Methionine synthase (338 aa).

Residues His-210, Cys-212, Glu-234, and Cys-294 each contribute to the Zn(2+) site.

The protein belongs to the archaeal MetE family. It depends on Zn(2+) as a cofactor.

It functions in the pathway amino-acid biosynthesis; L-methionine biosynthesis via de novo pathway. Functionally, catalyzes the transfer of a methyl group to L-homocysteine resulting in methionine formation. The physiological methyl donor is unknown. This Pyrococcus furiosus (strain ATCC 43587 / DSM 3638 / JCM 8422 / Vc1) protein is Methionine synthase.